Here is a 264-residue protein sequence, read N- to C-terminus: Thymidylate synthase (264 aa).

Residue Arg21 participates in dUMP binding. Residue His51 participates in (6R)-5,10-methylene-5,6,7,8-tetrahydrofolate binding. DUMP is bound at residue 126-127 (RR). The active-site Nucleophile is Cys146. Residues 166-169 (RSAD), Asn177, and 207-209 (HLY) each bind dUMP. Asp169 contributes to the (6R)-5,10-methylene-5,6,7,8-tetrahydrofolate binding site. Residue Ser263 coordinates (6R)-5,10-methylene-5,6,7,8-tetrahydrofolate.

It belongs to the thymidylate synthase family. Bacterial-type ThyA subfamily. As to quaternary structure, homodimer.

The protein localises to the cytoplasm. The catalysed reaction is dUMP + (6R)-5,10-methylene-5,6,7,8-tetrahydrofolate = 7,8-dihydrofolate + dTMP. The protein operates within pyrimidine metabolism; dTTP biosynthesis. Its function is as follows. Catalyzes the reductive methylation of 2'-deoxyuridine-5'-monophosphate (dUMP) to 2'-deoxythymidine-5'-monophosphate (dTMP) while utilizing 5,10-methylenetetrahydrofolate (mTHF) as the methyl donor and reductant in the reaction, yielding dihydrofolate (DHF) as a by-product. This enzymatic reaction provides an intracellular de novo source of dTMP, an essential precursor for DNA biosynthesis. This chain is Thymidylate synthase, found in Nitrosococcus oceani (strain ATCC 19707 / BCRC 17464 / JCM 30415 / NCIMB 11848 / C-107).